Consider the following 494-residue polypeptide: MGDDQSLRSTVAENDISANLSFTQGFLLGQLSVVLLIGAFIKFFIFGEAPPPPSRGLSHRASTHRRSNSIYTINPNEGTSRSLREKPSTSNVLRPVPSSATNTRSILRKTYYSAIPTNPSGKHGRHRIHHSSHQPESLDWFNVLIAQTIAQYRQTAYLLKDDPTSSILSSLTAALNNPEKKPSFIDKIAVTDISLGEEFPIFSNCRIIAVDDPNSDGGRLQALLDVDLSDDNLSIAVETSLLLNYPKPCSAILPVALSISVVRFSGTLCISLVPASTPPLHTPSPSPSPPTADGAVNAGTHPTNGSREPTQEAPNAQEESPPKTSPKSNVAFSFLPDYRLDLSVRSLIGSRSRLQDVPKVAQLVEARVHSWFEERVVEPRVQVVGLPDLWPRMGRTGVRTGEDSETGSNAASRSAMSADMGNSLRADDIGREPDGLRFRGLGARPPFDSVSRTSSFNVETGGFRSHSMTREGSGGGMSDDFHMPGTLPGGAAAN.

The Lumenal segment spans residues 1-25 (MGDDQSLRSTVAENDISANLSFTQG). Residues 26-46 (FLLGQLSVVLLIGAFIKFFIF) form a helical membrane-spanning segment. The Cytoplasmic segment spans residues 47–494 (GEAPPPPSRG…GTLPGGAAAN (448 aa)). Disordered stretches follow at residues 53–99 (PSRG…VPSS), 278–330 (PPLH…KSNV), and 395–494 (RTGV…AAAN). Over residues 57–67 (LSHRASTHRRS) the composition is skewed to basic residues. Composition is skewed to polar residues over residues 68–81 (NSIY…GTSR) and 88–99 (STSNVLRPVPSS). Positions 134 to 387 (QPESLDWFNV…EPRVQVVGLP (254 aa)) constitute an SMP-LTD domain. Over residues 278–290 (PPLHTPSPSPSPP) the composition is skewed to pro residues. Composition is skewed to polar residues over residues 300 to 318 (THPT…NAQE) and 406 to 415 (TGSNAASRSA). A compositionally biased stretch (basic and acidic residues) spans 425-437 (RADDIGREPDGLR).

It belongs to the MMM1 family. Homodimer. Component of the ER-mitochondria encounter structure (ERMES) or MDM complex, composed of mmm1, mdm10, mdm12 and mdm34. A mmm1 homodimer associates with one molecule of mdm12 on each side in a pairwise head-to-tail manner, and the SMP-LTD domains of mmm1 and mdm12 generate a continuous hydrophobic tunnel for phospholipid trafficking.

The protein resides in the endoplasmic reticulum membrane. Functionally, component of the ERMES/MDM complex, which serves as a molecular tether to connect the endoplasmic reticulum (ER) and mitochondria. Components of this complex are involved in the control of mitochondrial shape and protein biogenesis, and function in nonvesicular lipid trafficking between the ER and mitochondria. The mdm12-mmm1 subcomplex functions in the major beta-barrel assembly pathway that is responsible for biogenesis of all outer membrane beta-barrel proteins, and acts in a late step after the SAM complex. The mdm10-mdm12-mmm1 subcomplex further acts in the TOM40-specific pathway after the action of the mdm12-mmm1 complex. Essential for establishing and maintaining the structure of mitochondria and maintenance of mtDNA nucleoids. The sequence is that of Maintenance of mitochondrial morphology protein 1 from Aspergillus oryzae (strain ATCC 42149 / RIB 40) (Yellow koji mold).